We begin with the raw amino-acid sequence, 173 residues long: uncharacterized protein (173 aa).

The chain crosses the membrane as a helical span at residues 1-21 (MFIVFYLILIIFIFIYFHVYI).

To T.pallidum TP0711.

The protein localises to the membrane. This is an uncharacterized protein from Borreliella burgdorferi (strain ATCC 35210 / DSM 4680 / CIP 102532 / B31) (Borrelia burgdorferi).